A 338-amino-acid chain; its full sequence is MQKKSIYVAYTGGTIGMQRSEQGYIPVSGHLQRQLALMPEFHRPEMPDFTIHEYTPLMDSSDMTPEDWQHIAEDIKAHYDDYDGFVILHGTDTMAYTASALSFMLENLGKPVIVTGSQIPLAELRSDGQINLLNALYVAANYPINEVTLFFNNRLYRGNRTTKAHADGFDAFASPNLPPLLEAGIHIRRLNTPPAPHGEGELIVHPITPQPIGVVTIYPGISADVVRNFLRQPVKALILRSYGVGNAPQNKAFLQELQEASDRGIVVVNLTQCMSGKVNMGGYATGNALAHAGVIGGADMTVEATLTKLHYLLSQELDTETIRKAMSQNLRGELTPDD.

The Asparaginase/glutaminase domain maps to 4–329 (KSIYVAYTGG…ETIRKAMSQN (326 aa)). Threonine 14 serves as the catalytic O-isoaspartyl threonine intermediate. Substrate is bound by residues 59 to 61 (DSS) and 91 to 92 (TD).

The protein belongs to the asparaginase 1 family. As to quaternary structure, homotetramer.

It localises to the cytoplasm. The catalysed reaction is L-asparagine + H2O = L-aspartate + NH4(+). The polypeptide is L-asparaginase 1 (ansA) (Escherichia coli O157:H7).